Reading from the N-terminus, the 91-residue chain is Small ribosomal subunit protein bS20 (91 aa).

Belongs to the bacterial ribosomal protein bS20 family.

Its function is as follows. Binds directly to 16S ribosomal RNA. The polypeptide is Small ribosomal subunit protein bS20 (Caulobacter sp. (strain K31)).